Here is a 194-residue protein sequence, read N- to C-terminus: A-type ATP synthase subunit E (194 aa).

The protein belongs to the V-ATPase E subunit family. As to quaternary structure, has multiple subunits with at least A(3), B(3), C, D, E, F, H, I and proteolipid K(x).

It is found in the cell membrane. Functionally, component of the A-type ATP synthase that produces ATP from ADP in the presence of a proton gradient across the membrane. The protein is A-type ATP synthase subunit E of Saccharolobus islandicus (strain Y.N.15.51 / Yellowstone #2) (Sulfolobus islandicus).